The chain runs to 578 residues: Hyaluronan synthase 1 (578 aa).

Topologically, residues 1–25 (MRQQDAPKPTPAACRCSGLARRVLT) are cytoplasmic. The helical transmembrane segment at 26–46 (IAFALLILGLMTWAYAAGVPL) threads the bilayer. At 47–52 (ASDRYG) the chain is on the extracellular side. The helical transmembrane segment at 53–73 (LLAFGLYGAFLSAHLVAQSLF) threads the bilayer. At 74 to 399 (AYLEHRRVAA…NALWWHRHHA (326 aa)) the chain is on the cytoplasmic side. The helical transmembrane segment at 400–420 (WMTYEAVVSGLFPFFVAATVL) threads the bilayer. The Extracellular segment spans residues 421–430 (RLFYAGRPWA). Residues 431–451 (LLWVLLCVQGVALAKAAFAAW) traverse the membrane as a helical segment. Over 452–457 (LRGCLR) the chain is Cytoplasmic. Residues 458–478 (MVLLSLYAPLYMCGLLPAKFL) form a helical membrane-spanning segment. Residues 479 to 497 (ALVTMNQSGWGTSGRRKLA) lie on the Extracellular side of the membrane. The chain crosses the membrane as a helical span at residues 498–518 (ANYVPLLPLALWALLLLGGLV). Topologically, residues 519 to 540 (RSVAHEARADWSGPSRAAEAYH) are cytoplasmic. Residues 541 to 561 (LAAGAGAYVGYWVAMLTLYWV) form a helical membrane-spanning segment. The Extracellular portion of the chain corresponds to 562–578 (GVRRLCRRRTGGYRVQV).

It belongs to the NodC/HAS family. Requires Mg(2+) as cofactor. As to expression, widely expressed. Highly expressed in ovary followed by spleen, thymus, prostate, testes and large intestine. Weakly expressed in small intestine.

The protein resides in the membrane. It catalyses the reaction [hyaluronan](n) + UDP-N-acetyl-alpha-D-glucosamine = N-acetyl-beta-D-glucosaminyl-(1-&gt;4)-[hyaluronan](n) + UDP + H(+). The enzyme catalyses N-acetyl-beta-D-glucosaminyl-(1-&gt;4)-[hyaluronan](n) + UDP-alpha-D-glucuronate = [hyaluronan](n+1) + UDP + H(+). The protein operates within glycan biosynthesis; hyaluronan biosynthesis. Its function is as follows. Catalyzes the addition of GlcNAc or GlcUA monosaccharides to the nascent hyaluronan polymer. Therefore, it is essential to hyaluronan synthesis a major component of most extracellular matrices that has a structural role in tissues architectures and regulates cell adhesion, migration and differentiation. This is one of the isozymes catalyzing that reaction. Also able to catalyze the synthesis of chito-oligosaccharide depending on the substrate. This Homo sapiens (Human) protein is Hyaluronan synthase 1 (HAS1).